The primary structure comprises 359 residues: Mannose-1-phosphate guanylyltransferase catalytic subunit beta (359 aa).

The segment at 2–221 (KALILVGGFG…EGFWMDVGQP (220 aa)) is substrate-binding domain. Residue Asp109 participates in GDP-alpha-D-mannose binding. Asp109 provides a ligand contact to Mg(2+). Lys161 is a catalytic residue. Asp217 is a GDP-alpha-D-mannose binding site. Asp217 contributes to the Mg(2+) binding site. The interval 244–359 (ATGNGIIGPV…SSIPEPEIIM (116 aa)) is hexapeptide repeat domain.

Belongs to the transferase hexapeptide repeat family. As to quaternary structure, component of the GMPPA-GMPPB mannose-1-phosphate guanylyltransferase complex composed of 4 GMPPA subunits and 8 gmppB subunits; the complex is organized into three layers, a central layer made up of 2 gmppA dimers sandwiched between two layers each made up of 2 gmppB dimers. gmppB catalytic activity is reduced when part of the complex and binding of GDP-alpha-D-Mannose by gmppA induces allosteric feedback inhibition of gmppB. Mg(2+) serves as cofactor.

The enzyme catalyses alpha-D-mannose 1-phosphate + GTP + H(+) = GDP-alpha-D-mannose + diphosphate. Its pathway is nucleotide-sugar biosynthesis; GDP-alpha-D-mannose biosynthesis; GDP-alpha-D-mannose from alpha-D-mannose 1-phosphate (GTP route): step 1/1. Its activity is regulated as follows. Enzyme activity is reduced by incorporation into the GMPPA-GMPPB mannose-1-phosphate guanylyltransferase complex. Allosterically inhibited, when part of the GMPPA-GMPPB complex, by GDP-alpha-D-mannose binding to GMPPA. Functionally, catalytic subunit of the GMPPA-GMPPB mannose-1-phosphate guanylyltransferase complex. Catalyzes the formation of GDP-mannose, an essential precursor of glycan moieties of glycoproteins and glycolipids. Can catalyze the reverse reaction in vitro. Together with GMPPA regulates GDP-alpha-D-mannose levels. In Dictyostelium discoideum (Social amoeba), this protein is Mannose-1-phosphate guanylyltransferase catalytic subunit beta (gmppB).